We begin with the raw amino-acid sequence, 123 residues long: Protein crumbs homolog 3 (123 aa).

Residues 1–26 form the signal peptide; sequence MASPGLGLLLALGLPLLPARWGRAWG. Topologically, residues 27 to 59 are extracellular; that stretch reads QTLDPHVNENGTITPSAPGSGSNGALSQEAITA. N36 is a glycosylation site (N-linked (GlcNAc...) asparagine). The chain crosses the membrane as a helical span at residues 60–80; the sequence is IIVVFSLLAAVLLAVGLVLLL. The Cytoplasmic segment spans residues 81-120; that stretch reads RKLREKRQTQGTYRPSSEEQFNHAAEARAPQDSKETVRGC. The disordered stretch occupies residues 87 to 123; it reads RQTQGTYRPSSEEQFNHAAEARAPQDSKETVRGCLPI. The span at 96-117 shows a compositional bias: basic and acidic residues; that stretch reads SSEEQFNHAAEARAPQDSKETV. A PDZ-binding motif is present at residues 119-123; sequence GCLPI.

Component of a complex composed of CRB3, PALS1 and PATJ. Interacts (via C-terminus) with PALS1 (via PDZ domain). Interacts with PARD6A. Interacts (via intracellular domain) with EPB41L5. Interacts with WDR83.

The protein localises to the apical cell membrane. It localises to the cell junction. The protein resides in the tight junction. In terms of biological role, involved in the establishment of cell polarity in mammalian epithelial cells. Regulates the morphogenesis of tight junctions. Involved in promoting phosphorylation and cytoplasmic retention of transcriptional coactivators YAP1 and WWTR1/TAZ which leads to suppression of TGFB1-dependent transcription of target genes such as CCN2/CTGF, SERPINE1/PAI1, SNAI1/SNAIL1 and SMAD7. This is Protein crumbs homolog 3 from Canis lupus familiaris (Dog).